A 74-amino-acid polypeptide reads, in one-letter code: Cytochrome c oxidase subunit 2 (74 aa).

At 1 to 14 the chain is on the mitochondrial intermembrane side; the sequence is MAHPMQLGFQDAAS. A helical transmembrane segment spans residues 15 to 45; it reads PVMEELLHFHDHALMIVFLISTAVLYIIVVT. At 46–74 the chain is on the mitochondrial matrix side; it reads VTTKLTDKYVLDAQEIEMVWTIMPAVVLI.

Belongs to the cytochrome c oxidase subunit 2 family. As to quaternary structure, component of the cytochrome c oxidase (complex IV, CIV), a multisubunit enzyme composed of 14 subunits. The complex is composed of a catalytic core of 3 subunits MT-CO1, MT-CO2 and MT-CO3, encoded in the mitochondrial DNA, and 11 supernumerary subunits COX4I, COX5A, COX5B, COX6A, COX6B, COX6C, COX7A, COX7B, COX7C, COX8 and NDUFA4, which are encoded in the nuclear genome. The complex exists as a monomer or a dimer and forms supercomplexes (SCs) in the inner mitochondrial membrane with NADH-ubiquinone oxidoreductase (complex I, CI) and ubiquinol-cytochrome c oxidoreductase (cytochrome b-c1 complex, complex III, CIII), resulting in different assemblies (supercomplex SCI(1)III(2)IV(1) and megacomplex MCI(2)III(2)IV(2)). Found in a complex with TMEM177, COA6, COX18, COX20, SCO1 and SCO2. Interacts with TMEM177 in a COX20-dependent manner. Interacts with COX20. Interacts with COX16. It depends on Cu cation as a cofactor.

The protein localises to the mitochondrion inner membrane. The enzyme catalyses 4 Fe(II)-[cytochrome c] + O2 + 8 H(+)(in) = 4 Fe(III)-[cytochrome c] + 2 H2O + 4 H(+)(out). Its function is as follows. Component of the cytochrome c oxidase, the last enzyme in the mitochondrial electron transport chain which drives oxidative phosphorylation. The respiratory chain contains 3 multisubunit complexes succinate dehydrogenase (complex II, CII), ubiquinol-cytochrome c oxidoreductase (cytochrome b-c1 complex, complex III, CIII) and cytochrome c oxidase (complex IV, CIV), that cooperate to transfer electrons derived from NADH and succinate to molecular oxygen, creating an electrochemical gradient over the inner membrane that drives transmembrane transport and the ATP synthase. Cytochrome c oxidase is the component of the respiratory chain that catalyzes the reduction of oxygen to water. Electrons originating from reduced cytochrome c in the intermembrane space (IMS) are transferred via the dinuclear copper A center (CU(A)) of subunit 2 and heme A of subunit 1 to the active site in subunit 1, a binuclear center (BNC) formed by heme A3 and copper B (CU(B)). The BNC reduces molecular oxygen to 2 water molecules using 4 electrons from cytochrome c in the IMS and 4 protons from the mitochondrial matrix. The chain is Cytochrome c oxidase subunit 2 (mt-co2) from Amia calva (Bowfin).